The following is a 602-amino-acid chain: Potassium-transporting ATPase potassium-binding subunit (602 aa).

4 helical membrane passes run 5-25, 65-85, 136-156, and 179-199; these read AMLQLGLFLVVLIALAWPLGA, GYAVALILFNVLGVAAVYALQ, GLTVQNFVSAATGAAVVIALI, and LYVLLPLAVVFALVFTQQGAI. Residues 221 to 248 are disordered; sequence QDAKGNPVLGKDGKPVMEDKTSQTQTLP. Residues 231–241 show a composition bias toward basic and acidic residues; it reads KDGKPVMEDKT. The next 6 helical transmembrane spans lie at 283-303, 312-332, 419-439, 458-478, 523-543, and 566-586; these read LANFLQDIAIFLIPAALCFLF, QGWAILAAMTIMFATAVVVET, GLYGMLIFAILAVFIAGLMVG, AITILVTPTLVLALTAIAVSL, IMTGLAMFFGRFFMIVPILAI, and LFVTLLIGTVLLVGALNYVPA.

The protein belongs to the KdpA family. The system is composed of three essential subunits: KdpA, KdpB and KdpC.

It localises to the cell inner membrane. Its function is as follows. Part of the high-affinity ATP-driven potassium transport (or Kdp) system, which catalyzes the hydrolysis of ATP coupled with the electrogenic transport of potassium into the cytoplasm. This subunit binds the periplasmic potassium ions and delivers the ions to the membrane domain of KdpB through an intramembrane tunnel. The protein is Potassium-transporting ATPase potassium-binding subunit of Chromobacterium violaceum (strain ATCC 12472 / DSM 30191 / JCM 1249 / CCUG 213 / NBRC 12614 / NCIMB 9131 / NCTC 9757 / MK).